A 292-amino-acid polypeptide reads, in one-letter code: MFRSFSTAAKQAVKGTYVQRAIVGGAAVVGIGASTMLYADSLTADAMTAAEHGLHAPGYGWSHNGPLETFDHSSIRRGYQVYREVCAACHSLDRVAWRTMVGVSHTNAEVRAMAEEFEYDDEPDDQGNPKKRPGKLADYVPGPYPNEQAARAANQGALPPDLSLIVKARHGGPDYIFALLTGYPEEPPAGVVLPPGANYNPYFPGGSIAMGRVLFDDLVEYEDGTPATTSQMAKDVTTFLHWCSEPEHDERKRLGLKAMIVLSSLYLLSVWVKKFKWASIKSRKIVFNPPKK.

Residues 1–46 (MFRSFSTAAKQAVKGTYVQRAIVGGAAVVGIGASTMLYADSLTADA) constitute a mitochondrion transit peptide. The Mitochondrial intermembrane segment spans residues 47–253 (MTAAEHGLHA…SEPEHDERKR (207 aa)). Residues 73 to 226 (SSIRRGYQVY…DLVEYEDGTP (154 aa)) enclose the Cytochrome c domain. Heme c contacts are provided by cysteine 86, cysteine 89, and histidine 90. Residues 117-137 (FEYDDEPDDQGNPKKRPGKLA) form a disordered region. Heme c is bound at residue methionine 210. A helical membrane pass occupies residues 254 to 272 (LGLKAMIVLSSLYLLSVWV). At 273 to 292 (KKFKWASIKSRKIVFNPPKK) the chain is on the mitochondrial matrix side.

The protein belongs to the cytochrome c family. As to quaternary structure, component of the ubiquinol-cytochrome c oxidoreductase (cytochrome b-c1 complex, complex III, CIII), a multisubunit enzyme composed of 3 respiratory subunits cytochrome b, cytochrome c1 and Rieske protein, 2 core protein subunits, and additional low-molecular weight protein subunits. The complex exists as an obligatory dimer and forms supercomplexes (SCs) in the inner mitochondrial membrane with cytochrome c oxidase (complex IV, CIV). Requires heme c as cofactor.

It is found in the mitochondrion inner membrane. It catalyses the reaction a quinol + 2 Fe(III)-[cytochrome c](out) = a quinone + 2 Fe(II)-[cytochrome c](out) + 2 H(+)(out). Its function is as follows. Component of the ubiquinol-cytochrome c oxidoreductase, a multisubunit transmembrane complex that is part of the mitochondrial electron transport chain which drives oxidative phosphorylation. The respiratory chain contains 3 multisubunit complexes succinate dehydrogenase (complex II, CII), ubiquinol-cytochrome c oxidoreductase (cytochrome b-c1 complex, complex III, CIII) and cytochrome c oxidase (complex IV, CIV), that cooperate to transfer electrons derived from NADH and succinate to molecular oxygen, creating an electrochemical gradient over the inner membrane that drives transmembrane transport and the ATP synthase. The cytochrome b-c1 complex catalyzes electron transfer from ubiquinol to cytochrome c, linking this redox reaction to translocation of protons across the mitochondrial inner membrane, with protons being carried across the membrane as hydrogens on the quinol. In the process called Q cycle, 2 protons are consumed from the matrix, 4 protons are released into the intermembrane space and 2 electrons are passed to cytochrome c. Cytochrome c1 is a catalytic core subunit containing a c-type heme. It transfers electrons from the [2Fe-2S] iron-sulfur cluster of the Rieske protein to cytochrome c. The protein is Cytochrome c1, heme protein, mitochondrial (CYT1) of Kluyveromyces lactis (strain ATCC 8585 / CBS 2359 / DSM 70799 / NBRC 1267 / NRRL Y-1140 / WM37) (Yeast).